We begin with the raw amino-acid sequence, 161 residues long: 18.1 kDa class I heat shock protein (161 aa).

Positions 45–160 constitute a sHSP domain; it reads DVAAFTNARV…QVKSIDISGA (116 aa).

It belongs to the small heat shock protein (HSP20) family. As to quaternary structure, may form oligomeric structures. Binds to AKR2A.

It is found in the cytoplasm. The polypeptide is 18.1 kDa class I heat shock protein (HSP18.1) (Arabidopsis thaliana (Mouse-ear cress)).